Reading from the N-terminus, the 253-residue chain is Trypsin delta (253 aa).

The N-terminal stretch at 1-22 is a signal peptide; it reads MLKFVILLSAVACALGGTIPEG. Positions 23–30 are cleaved as a propeptide — activation peptide; sequence LLPQLDGR. A Peptidase S1 domain is found at 31 to 253; sequence IVGGTATTIS…DLRAWVVRNA (223 aa). A disulfide bridge connects residues Cys-56 and Cys-72. Residues His-71 and Asp-116 each act as charge relay system in the active site. 2 cysteine pairs are disulfide-bonded: Cys-180–Cys-197 and Cys-206–Cys-230. Ser-210 functions as the Charge relay system in the catalytic mechanism.

It belongs to the peptidase S1 family.

It localises to the secreted. Its subcellular location is the extracellular space. The enzyme catalyses Preferential cleavage: Arg-|-Xaa, Lys-|-Xaa.. The sequence is that of Trypsin delta from Drosophila erecta (Fruit fly).